The following is a 724-amino-acid chain: Probable serine/threonine-protein kinase KKQ8 (724 aa).

2 disordered regions span residues Met1–Ser81 and His93–Leu188. Ser19 is subject to Phosphoserine. Positions Pro45–Lys54 are enriched in low complexity. Over residues Phe95–Pro106 the composition is skewed to polar residues. Residues Arg143–Ser162 show a composition bias toward low complexity. 3 positions are modified to phosphoserine: Ser232, Ser238, and Ser241. A disordered region spans residues Ser329–Asp355. The span at Gly338–Gln351 shows a compositional bias: polar residues. One can recognise a Protein kinase domain in the interval Gly412–Met712. Residues Val418–Val426 and Lys455 contribute to the ATP site. Asp563 functions as the Proton acceptor in the catalytic mechanism.

Belongs to the protein kinase superfamily. CAMK Ser/Thr protein kinase family. NPR/HAL subfamily. HAL5 sub-subfamily.

The protein resides in the cytoplasm. It carries out the reaction L-seryl-[protein] + ATP = O-phospho-L-seryl-[protein] + ADP + H(+). It catalyses the reaction L-threonyl-[protein] + ATP = O-phospho-L-threonyl-[protein] + ADP + H(+). The protein is Probable serine/threonine-protein kinase KKQ8 (KKQ8) of Saccharomyces cerevisiae (strain ATCC 204508 / S288c) (Baker's yeast).